We begin with the raw amino-acid sequence, 249 residues long: AA9 family lytic polysaccharide monooxygenase cel61B (249 aa).

The first 19 residues, 1–19 (MKSCAILAALGCLAGSVLG), serve as a signal peptide directing secretion. Residue histidine 20 coordinates Cu(2+). The N-linked (GlcNAc...) asparagine glycan is linked to asparagine 25. 2 disulfides stabilise this stretch: cysteine 78–cysteine 198 and cysteine 120–cysteine 124. Residue histidine 108 participates in Cu(2+) binding. Positions 184 and 193 each coordinate O2. Residue tyrosine 195 coordinates Cu(2+).

This sequence belongs to the polysaccharide monooxygenase AA9 family. Monomer. The cofactor is Cu(2+).

The protein resides in the secreted. The enzyme catalyses [(1-&gt;4)-beta-D-glucosyl]n+m + reduced acceptor + O2 = 4-dehydro-beta-D-glucosyl-[(1-&gt;4)-beta-D-glucosyl]n-1 + [(1-&gt;4)-beta-D-glucosyl]m + acceptor + H2O.. Its function is as follows. Lytic polysaccharide monooxygenase (LPMO) that depolymerizes crystalline and amorphous polysaccharides via the oxidation of scissile alpha- or beta-(1-4)-glycosidic bonds, yielding C1 or C4 oxidation products. Catalysis by LPMOs requires the reduction of the active-site copper from Cu(II) to Cu(I) by a reducing agent and H(2)O(2) or O(2) as a cosubstrate. The sequence is that of AA9 family lytic polysaccharide monooxygenase cel61B from Hypocrea jecorina (strain QM6a) (Trichoderma reesei).